We begin with the raw amino-acid sequence, 75 residues long: Small ribosomal subunit protein eS28 (75 aa).

Belongs to the eukaryotic ribosomal protein eS28 family.

This is Small ribosomal subunit protein eS28 from Natronomonas pharaonis (strain ATCC 35678 / DSM 2160 / CIP 103997 / JCM 8858 / NBRC 14720 / NCIMB 2260 / Gabara) (Halobacterium pharaonis).